Consider the following 332-residue polypeptide: Trace amine-associated receptor 1 (332 aa).

Residues 1-23 (MHLCHAITNISHRNSDWSREVQA) lie on the Extracellular side of the membrane. The N-linked (GlcNAc...) asparagine glycan is linked to Asn9. The helical transmembrane segment at 24-48 (SLYSLMSLIILATLVGNLIVIISIS) threads the bilayer. The Cytoplasmic portion of the chain corresponds to 49–58 (HFKQLHTPTN). A helical transmembrane segment spans residues 59 to 80 (WLLHSMAIVDFLLGCLIMPCSM). The Extracellular portion of the chain corresponds to 81 to 95 (VRTVERCWYFGEILC). Cys95 and Cys181 form a disulfide bridge. A helical transmembrane segment spans residues 96 to 118 (KVHTSTDIMLSSASIFHLAFISI). Residue Asp102 coordinates 2-phenylethylamine. At 119–138 (DRYCAVCDPLRYKAKINIST) the chain is on the cytoplasmic side. The helical transmembrane segment at 139–160 (ILVMILVSWSLPAVYAFGMIFL) threads the bilayer. The Extracellular segment spans residues 161–187 (ELNLKGVEELYRSQVSDLGGCSPFFSK). Positions 174 to 185 (QVSDLGGCSPFF) are extracellular Loop 2 (ECL2). Residues 188 to 210 (VSGVLAFMTSFYIPGSVMLFVYY) form a helical membrane-spanning segment. Residues 211-246 (RIYFIAKGQARSINRTNVQVGLEGKSQAPQSKETKA) are Cytoplasmic-facing. Residues 247–270 (AKTLGIMVGVFLVCWCPFFLCTVL) traverse the membrane as a helical segment. Over 271–283 (DPFLGYVIPPSLN) the chain is Extracellular. Residues 284–304 (DALYWFGYLNSALNPMVYAFF) form a helical membrane-spanning segment. Over 305–332 (YPWFRRALKMVLLGKIFQKDSSRSKLFL) the chain is Cytoplasmic.

The protein belongs to the G-protein coupled receptor 1 family. In terms of tissue distribution, widely distributed throughout the brain. Strongly expressed in the mitral cell layer of the olfactory bulb, piriform cortex, the arcuate, motor, and mesencephalic trigeminal nuclei, lateral reticular and hypoglossal nuclei, cerebellar Purkinje cells, and ventral horn of the spinal cord. Moderately expressed in the frontal, entorhinal, and agranular cortices, the ventral pallidum, thalamus, hippocampus, several hypothalamic nuclei, ambiguus, dorsal raphe, and gigantocellular reticular nuclei. Weakly expressed in the septum, basal ganglia, amygdala, myelencephalon, and spinal cord dorsal horn. Particularly interesting is the moderate expression in several monoaminergic cell groups, namely the dorsal raphe, the locus coeruleus, and the ventral tegmental area.

The protein resides in the endomembrane system. The protein localises to the endoplasmic reticulum membrane. It localises to the cell membrane. Activated by SEP-363856 small molecule: IHCH-7179 acts both as an agonist activator for HTR1A and TAAR1. In terms of biological role, intracellular G-protein coupled receptor for trace amines, which recognizes endogenous amine-containing metabolites such as beta-phenylethylamine (beta-PEA), 3-iodothyronamine (T1AM), isoamylamine (IAA), cadaverine (CAD), cyclohexylamine (CHA), p-tyramine (p-TYR), trimethylamine (TMA), octopamine and tryptamine. Also functions as a receptor for various drugs and psychoactive substances, such as amphetamine and methamphetamine. Unresponsive to classical biogenic amines, such as epinephrine and histamine and only partially activated by dopamine and serotonin. Expressed in both the central and peripheral nervous system: TAAR1 activation regulates the activity of several neurotransmitter signaling pathways by (1) decreasing the basal firing rates of the neurons involved and by (2) lowering the sensitivity of receptors to neurotransmitters. Ligand binding causes a conformation change that triggers signaling via guanine nucleotide-binding proteins (G proteins) and modulates the activity of downstream effectors. TAAR1 is coupled with different G(i)/G(o)-, G(s)- or G(q)/G(11) classes of G alpha proteins depending on the ligand. CAD-binding is coupled to G(i)/G(o) G alpha proteins and mediates inhibition of adenylate cyclase activity. T1AM- or beta-PEA-binding is coupled to G(s) G alpha proteins and mediates activation of adenylate cyclase activity. CHA- or IAA-binding is coupled to G(q)/G(11) G alpha proteins and activates phospholipase C-beta, releasing diacylglycerol (DAG) and inositol 1,4,5-trisphosphate (IP3) second messengers. TMA-binding is coupled with all three G(i)/G(o)-, G(s)- or G(q)/G(11) G alpha protein subtypes. The sequence is that of Trace amine-associated receptor 1 from Mus musculus (Mouse).